The chain runs to 1406 residues: DNA-directed RNA polymerase subunit beta' (1406 aa).

Zn(2+) contacts are provided by Cys70, Cys72, Cys85, and Cys88. Residues Asp460, Asp462, and Asp464 each contribute to the Mg(2+) site. Positions 814, 888, 895, and 898 each coordinate Zn(2+).

It belongs to the RNA polymerase beta' chain family. As to quaternary structure, the RNAP catalytic core consists of 2 alpha, 1 beta, 1 beta' and 1 omega subunit. When a sigma factor is associated with the core the holoenzyme is formed, which can initiate transcription. Requires Mg(2+) as cofactor. Zn(2+) serves as cofactor.

The catalysed reaction is RNA(n) + a ribonucleoside 5'-triphosphate = RNA(n+1) + diphosphate. DNA-dependent RNA polymerase catalyzes the transcription of DNA into RNA using the four ribonucleoside triphosphates as substrates. This is DNA-directed RNA polymerase subunit beta' from Yersinia enterocolitica serotype O:8 / biotype 1B (strain NCTC 13174 / 8081).